The following is a 226-amino-acid chain: Tyramine N-feruloyltransferase 4/11 (226 aa).

The segment at 29 to 45 (HIYKLFYQIHEYHNYTH) is important in binding site and for catalytic activity. Residues 72 to 222 (VLLLEVSPTP…VGDALQKYAD (151 aa)) enclose the N-acetyltransferase domain.

This sequence belongs to the acetyltransferase family. Homodimer.

Its subcellular location is the cytoplasm. The enzyme catalyses tyramine + (E)-feruloyl-CoA = N-[(E)-feruloyl]tyramine + CoA + H(+). Its activity is regulated as follows. Inhibited by (2-hydroxyphenyl)amino sulfinyl acetic acid 1,1-dimethylethyl ester, by DEPC and by N-ethylmaleimide. Its function is as follows. Synthesizes amides which are involved in stress response in the cell wall. Catalyzes the synthesis of hydroxycinnamic acid amides from hydroxycinnamoyl-CoA thioesters and various hydroxyphenylethylamines such as 4-coumaroyl-CoA and sinapoyl-CoA. The polypeptide is Tyramine N-feruloyltransferase 4/11 (THT4) (Nicotiana tabacum (Common tobacco)).